A 228-amino-acid polypeptide reads, in one-letter code: Large ribosomal subunit protein uL3 (228 aa).

This sequence belongs to the universal ribosomal protein uL3 family. In terms of assembly, part of the 50S ribosomal subunit. Forms a cluster with proteins L14 and L19.

In terms of biological role, one of the primary rRNA binding proteins, it binds directly near the 3'-end of the 23S rRNA, where it nucleates assembly of the 50S subunit. The polypeptide is Large ribosomal subunit protein uL3 (Leuconostoc mesenteroides subsp. mesenteroides (strain ATCC 8293 / DSM 20343 / BCRC 11652 / CCM 1803 / JCM 6124 / NCDO 523 / NBRC 100496 / NCIMB 8023 / NCTC 12954 / NRRL B-1118 / 37Y)).